Consider the following 538-residue polypeptide: Cytochrome P450 52-M1 (538 aa).

The chain crosses the membrane as a helical span at residues 18-38; it reads GLLPLLFVAFLVLHEPIWLLW. Residue Cys484 participates in heme binding.

Belongs to the cytochrome P450 family. Heme is required as a cofactor.

It localises to the membrane. The enzyme catalyses an omega-methyl-long-chain fatty acid + reduced [NADPH--hemoprotein reductase] + O2 = an omega-hydroxy-long-chain fatty acid + oxidized [NADPH--hemoprotein reductase] + H2O + H(+). It carries out the reaction an (omega-1)-ethyl fatty acid + reduced [NADPH--hemoprotein reductase] + O2 = an (omega-1)-hydroxy-long-chain fatty acid + oxidized [NADPH--hemoprotein reductase] + H2O + H(+). It catalyses the reaction (9Z)-octadecenoate + reduced [NADPH--hemoprotein reductase] + O2 = 18-hydroxy-(9Z)-octadecenoate + oxidized [NADPH--hemoprotein reductase] + H2O + H(+). The catalysed reaction is (9Z)-octadecenoate + reduced [NADPH--hemoprotein reductase] + O2 = 17-hydroxy-(9Z)-octadecenoate + oxidized [NADPH--hemoprotein reductase] + H2O + H(+). The enzyme catalyses (9Z,12Z)-octadecadienoate + reduced [NADPH--hemoprotein reductase] + O2 = 18-hydroxy-(9Z,12Z)-octadecadienoate + oxidized [NADPH--hemoprotein reductase] + H2O + H(+). It carries out the reaction (9Z,12Z)-octadecadienoate + reduced [NADPH--hemoprotein reductase] + O2 = 17-hydroxy-(9Z,12Z)-octadecadienoate + oxidized [NADPH--hemoprotein reductase] + H2O + H(+). It catalyses the reaction hexadecanoate + reduced [NADPH--hemoprotein reductase] + O2 = 16-hydroxyhexadecanoate + oxidized [NADPH--hemoprotein reductase] + H2O + H(+). The catalysed reaction is (9Z)-hexadecenoate + reduced [NADPH--hemoprotein reductase] + O2 = (9Z)-16-hydroxyhexadec-9-enoate + oxidized [NADPH--hemoprotein reductase] + H2O + H(+). The enzyme catalyses octadecanoate + reduced [NADPH--hemoprotein reductase] + O2 = 18-hydroxyoctadecanoate + oxidized [NADPH--hemoprotein reductase] + H2O + H(+). Catalyzes the first step of sophorolipid biosynthesis. Catalyzes the terminal (at the omega-position) or subterminal (at the omega(-1)-position) hydroxylation of a fatty acid. This converts the fatty acid to a substrate for the subsequent glycosyltransferase reactions. Oleic acid is the preferred substrate, but it acts on various other C-16, C-18 and C-20 saturated and unsaturated fatty acids, namely palmitic, palmitoleic, stearic, linoleic, cis-9,10-epoxystearic, trans-9,10-epoxystearic and arachidonic acid. The protein is Cytochrome P450 52-M1 of Starmerella bombicola (Yeast).